We begin with the raw amino-acid sequence, 130 residues long: Small ribosomal subunit protein uS12c (130 aa).

Belongs to the universal ribosomal protein uS12 family. As to quaternary structure, part of the 30S ribosomal subunit.

It localises to the plastid. The protein resides in the chloroplast. Functionally, with S4 and S5 plays an important role in translational accuracy. Located at the interface of the 30S and 50S subunits. This chain is Small ribosomal subunit protein uS12c (rps12), found in Tetradesmus obliquus (Green alga).